The following is a 724-amino-acid chain: Tripartite terminase subunit 1 (724 aa).

The C3H1-type zinc finger occupies 175-203 (CAVCFEELCVTANQGEATHRRLLGCVCDH). The segment at 410 to 445 (GGDDADADGGAAGGADAGDGGVGDEDGPGAPPPADA) is disordered. Gly residues predominate over residues 419–430 (GAAGGADAGDGG). Position 652–659 (652–659 (FRSVFHCG)) interacts with ATP.

Belongs to the herpesviridae TRM1 protein family. In terms of assembly, associates with TRM2 and TRM3 to form the tripartite terminase complex. Interacts with portal protein.

It is found in the host nucleus. Component of the molecular motor that translocates viral genomic DNA in empty capsid during DNA packaging. Forms a tripartite terminase complex together with TRM2 and TRM3 in the host cytoplasm. Once the complex reaches the host nucleus, it interacts with the capsid portal vertex. This portal forms a ring in which genomic DNA is translocated into the capsid. TRM1 carries an endonuclease activity that plays an important role for the cleavage of concatemeric viral DNA into unit length genomes. This is Tripartite terminase subunit 1 from Suid herpesvirus 1 (strain Indiana-Funkhauser / Becker) (SuHV-1).